The primary structure comprises 195 residues: Cholesin (195 aa).

The segment at 1 to 78 (MAKHKRKGLE…KEEKKRLREA (78 aa)) is disordered. 2 stretches are compositionally biased toward basic and acidic residues: residues 8 to 18 (GLEGTGKESKR) and 26 to 39 (ETPR…DKET). Phosphoserine occurs at positions 41, 48, and 52. Residues 53–77 (PEERRVLERKLKKERKKEEKKRLRE) show a composition bias toward basic and acidic residues. Ser96 bears the Phosphoserine mark.

In terms of tissue distribution, secreted via exosomes, secreted from the instestine, secretion is induced by feeding and cholesterol absorption. Expressed in enterocytes.

It is found in the secreted. In terms of biological role, hormone secreted from the intestine in response to cholesterol, where it acts to inhibit cholesterol synthesis in the liver and VLDL secretion,leading to a reduction in circulating cholesterol levels. Acts through binding to its receptor, GPR146. The chain is Cholesin (Chlsn) from Mus musculus (Mouse).